A 226-amino-acid chain; its full sequence is Deoxyribose-phosphate aldolase (226 aa).

Glu-96 serves as the catalytic Proton donor/acceptor. Residue Lys-157 is the Schiff-base intermediate with acetaldehyde of the active site. The Proton donor/acceptor role is filled by Lys-185.

It belongs to the DeoC/FbaB aldolase family. DeoC type 1 subfamily.

It localises to the cytoplasm. The catalysed reaction is 2-deoxy-D-ribose 5-phosphate = D-glyceraldehyde 3-phosphate + acetaldehyde. Its pathway is carbohydrate degradation; 2-deoxy-D-ribose 1-phosphate degradation; D-glyceraldehyde 3-phosphate and acetaldehyde from 2-deoxy-alpha-D-ribose 1-phosphate: step 2/2. Catalyzes a reversible aldol reaction between acetaldehyde and D-glyceraldehyde 3-phosphate to generate 2-deoxy-D-ribose 5-phosphate. In Gloeobacter violaceus (strain ATCC 29082 / PCC 7421), this protein is Deoxyribose-phosphate aldolase.